Consider the following 423-residue polypeptide: Probable sucrose-phosphate synthase (423 aa).

Belongs to the glycosyltransferase 1 family.

It catalyses the reaction beta-D-fructose 6-phosphate + UDP-alpha-D-glucose = sucrose 6(F)-phosphate + UDP + H(+). Functionally, plays a role in sucrose synthesis by catalyzing the first step of sucrose biosynthesis from UDP-glucose and fructose-6-phosphate. The protein is Probable sucrose-phosphate synthase of Thermosipho melanesiensis (strain DSM 12029 / CIP 104789 / BI429).